The primary structure comprises 278 residues: MTVLHSVDFFPSGNASVAIEPRLPQADFPEHHHDFHEIVIVEHGTGIHVFNGQPYTITGGTVCFVRDHDRHLYEHTDNLCLTNVLYRSPDRFQFLAGLNQLLPQELDGQYPSHWRVNHSVLQQVRQLVAQMEQQEGENDLPSTASREILFMQLLLLLRKSSLQENLENSASRLNLLLAWLEDHFADEVNWDAVAEQFSLSLRTLHRQLKQQTGVTPQRYLNRLRLMKARHLLRHSEASVTDIAYRCGFSDSNHFSTLFRREFNWSPRDIRQGRDGFLQ.

The 99-residue stretch at 174-272 folds into the HTH araC/xylS-type domain; that stretch reads NLLLAWLEDH…NWSPRDIRQG (99 aa). 2 DNA-binding regions (H-T-H motif) span residues 191–212 and 239–262; these read DAVAEQFSLSLRTLHRQLKQQT and VTDIAYRCGFSDSNHFSTLFRREF.

In terms of assembly, binds DNA as a dimer.

Its subcellular location is the cytoplasm. Its function is as follows. Activates expression of the rhaBAD and rhaT operons. This chain is HTH-type transcriptional activator RhaS, found in Escherichia coli O139:H28 (strain E24377A / ETEC).